Reading from the N-terminus, the 364-residue chain is Methylthioribose-1-phosphate isomerase (364 aa).

Asp-254 serves as the catalytic Proton donor.

The protein belongs to the eIF-2B alpha/beta/delta subunits family. MtnA subfamily.

It is found in the cytoplasm. It localises to the nucleus. It carries out the reaction 5-(methylsulfanyl)-alpha-D-ribose 1-phosphate = 5-(methylsulfanyl)-D-ribulose 1-phosphate. The protein operates within amino-acid biosynthesis; L-methionine biosynthesis via salvage pathway; L-methionine from S-methyl-5-thio-alpha-D-ribose 1-phosphate: step 1/6. Its function is as follows. Catalyzes the interconversion of methylthioribose-1-phosphate (MTR-1-P) into methylthioribulose-1-phosphate (MTRu-1-P). This Drosophila sechellia (Fruit fly) protein is Methylthioribose-1-phosphate isomerase.